We begin with the raw amino-acid sequence, 522 residues long: Solute carrier family 2, facilitated glucose transporter member 2 (522 aa).

Over 1-10 (MSEDKITGTL) the chain is Cytoplasmic. A helical membrane pass occupies residues 11-31 (AFTVFTAVLGSFQFGYDIGVI). Over 32-96 (NAPQEVIISH…SAHIVTMLWS (65 aa)) the chain is Extracellular. Asn-62 carries N-linked (GlcNAc...) asparagine glycosylation. Residues 97-117 (LSVSSFAVGGMVASFFGGWLG) traverse the membrane as a helical segment. The Cytoplasmic segment spans residues 118–125 (DKLGRIKA). A helical membrane pass occupies residues 126 to 146 (MLAANSLSLTGALLMGCSKFG). The Extracellular segment spans residues 147–156 (PAHALIIAGR). Residues 157–177 (SVSGLYCGLISGLVPMYIGEI) traverse the membrane as a helical segment. The Cytoplasmic segment spans residues 178-185 (APTTLRGA). The chain crosses the membrane as a helical span at residues 186-206 (LGTLHQLALVTGILISQIAGL). Position 191 (Gln-191) interacts with D-glucose. Over 207 to 215 (SFILGNQDY) the chain is Extracellular. Residues 216–236 (WHILLGLSAVPALLQCLLLLF) traverse the membrane as a helical segment. Residues 237 to 301 (CPESPRYLYL…LFTDPNYRQP (65 aa)) are Cytoplasmic-facing. A helical transmembrane segment spans residues 302–322 (IVVALMLHLAQQFSGINGIFY). Residues 312–313 (QQ) and Asn-318 contribute to the D-glucose site. The Extracellular portion of the chain corresponds to 323-337 (YSTSIFQTAGISQPV). Residues 338-358 (YATIGVGAINMIFTAVSVLLV) form a helical membrane-spanning segment. Position 347 (Asn-347) interacts with D-glucose. Residues 359-365 (EKAGRRT) lie on the Cytoplasmic side of the membrane. Residues 366 to 386 (LFLAGMIGMFFCAVFMSLGLV) form a helical membrane-spanning segment. Topologically, residues 387–401 (LLDKFTWMSYVSMTA) are extracellular. The helical transmembrane segment at 402–422 (IFLFVSFFEIGPGPIPWFMVA) threads the bilayer. D-glucose is bound by residues Glu-410 and Trp-418. The Cytoplasmic segment spans residues 423–431 (EFFSQGPRP). Residues 432-452 (TALALAAFSNWVCNFIIALCF) form a helical membrane-spanning segment. At 453–459 (QYIADFL) the chain is on the extracellular side. The helical transmembrane segment at 460-480 (GPYVFFLFAGVVLVFTLFTFF) threads the bilayer. The Cytoplasmic segment spans residues 481 to 522 (KVPETKGKSFDEIAAEFRKKSGSAPPRKATVQMEFLGSSETV). The residue at position 521 (Thr-521) is a Phosphothreonine.

The protein belongs to the major facilitator superfamily. Sugar transporter (TC 2.A.1.1) family. Glucose transporter subfamily. In terms of processing, N-glycosylated; required for stability and retention at the cell surface of pancreatic beta cells. Present in liver, intestine, kidney and beta-pancreatic islet cells.

It is found in the cell membrane. The catalysed reaction is D-glucose(out) = D-glucose(in). It carries out the reaction D-fructose(out) = D-fructose(in). It catalyses the reaction L-dehydroascorbate(out) = L-dehydroascorbate(in). The enzyme catalyses D-galactose(in) = D-galactose(out). D-glucose and maltose competitively inhibit fructose transport. D-glucose, D-fructose and maltose inhibit deoxyglucose transport. Functionally, facilitative hexose transporter that mediates the transport of glucose, fructose and galactose. Likely mediates the bidirectional transfer of glucose across the plasma membrane of hepatocytes and is responsible for uptake of glucose by the beta cells; may comprise part of the glucose-sensing mechanism of the beta cell. May also participate with the Na(+)/glucose cotransporter in the transcellular transport of glucose in the small intestine and kidney. Also able to mediate the transport of dehydroascorbate. This chain is Solute carrier family 2, facilitated glucose transporter member 2, found in Rattus norvegicus (Rat).